The sequence spans 601 residues: MHVLRTHLAGDLGKETAGQTVTLTGWVSRRRDHGGVIFIDLRDSSGLVQVVFRENDVAEQAHHLRSEFCIKVTGEVEARPEGSENPNLASGAIEVNVTDLEILNEAAPLPFQIDDVSQGGEVGEETRLKYRYLDLRRPNQGAALRLRSQANKAARNVLDSHDFVEIETPTLTRSTPEGARDFLVPARLKPGSWYALPQSPQLFKQLLMVAGMERYYQIARCYRDEDFRADRQPEFTQLDIEMSFVDQDDVIALAEEIVSSLWKLIGYEIPTPIPRMTYADAMRLYGSDKPDLRFDIKIVECTDFFKNTTFRVFQNEYVGAVVMDGGASQPRRQLDAWQEWAKQRGAKGLAYILVGENGELTGPVSKNITDEERAGIAAHVGAKPGDCIFFAAGETKSSRALLGAARNEIAKKLDLIKEGDWAFTWVVDAPLFEPSSDATASGDVALGHSKWTAVHHAFTSPKPEWLDSFDENPGEATAYAYDIVCNGNEIGGGSIRIHRRDVQERVFKVMGITEDEAREKFGFLLDAFAFGAPPHGGIAFGWDRIVSLLGGFSSIRDVIAFPKSGGGVDPLTDAPAPIPLEQRRETGVDFKPKKKTDESAV.

Glu-177 is an L-aspartate binding site. The segment at 201-204 (QLFK) is aspartate. L-aspartate is bound at residue Arg-223. Residues 223 to 225 (RDE) and Gln-232 each bind ATP. Position 455 (His-455) interacts with L-aspartate. Residue Glu-489 coordinates ATP. Arg-496 serves as a coordination point for L-aspartate. Position 541–544 (541–544 (GWDR)) interacts with ATP. Residues 568 to 601 (VDPLTDAPAPIPLEQRRETGVDFKPKKKTDESAV) are disordered. Residues 581-601 (EQRRETGVDFKPKKKTDESAV) are compositionally biased toward basic and acidic residues.

Belongs to the class-II aminoacyl-tRNA synthetase family. Type 1 subfamily. Homodimer.

The protein resides in the cytoplasm. It carries out the reaction tRNA(Asx) + L-aspartate + ATP = L-aspartyl-tRNA(Asx) + AMP + diphosphate. Functionally, aspartyl-tRNA synthetase with relaxed tRNA specificity since it is able to aspartylate not only its cognate tRNA(Asp) but also tRNA(Asn). Reaction proceeds in two steps: L-aspartate is first activated by ATP to form Asp-AMP and then transferred to the acceptor end of tRNA(Asp/Asn). The protein is Aspartate--tRNA(Asp/Asn) ligase of Corynebacterium diphtheriae (strain ATCC 700971 / NCTC 13129 / Biotype gravis).